We begin with the raw amino-acid sequence, 139 residues long: Endoribonuclease YbeY (139 aa).

The Zn(2+) site is built by His107, His111, and Asp117.

This sequence belongs to the endoribonuclease YbeY family. Requires Zn(2+) as cofactor.

The protein resides in the cytoplasm. Its function is as follows. Single strand-specific metallo-endoribonuclease involved in late-stage 70S ribosome quality control and in maturation of the 3' terminus of the 16S rRNA. This is Endoribonuclease YbeY from Bacteroides fragilis (strain ATCC 25285 / DSM 2151 / CCUG 4856 / JCM 11019 / LMG 10263 / NCTC 9343 / Onslow / VPI 2553 / EN-2).